Consider the following 74-residue polypeptide: Omega-conotoxin-like PuIIA (74 aa).

The first 22 residues, M1 to A22, serve as a signal peptide directing secretion. A propeptide spanning residues E23–R46 is cleaved from the precursor. 3 disulfide bridges follow: C48/C62, C55/C66, and C61/C73.

Belongs to the conotoxin O1 superfamily. As to expression, expressed by the venom duct.

It is found in the secreted. Omega-conotoxins act at presynaptic membranes, they bind and block voltage-gated calcium channels (Cav). The protein is Omega-conotoxin-like PuIIA of Conus pulicarius (Flea-bitten cone).